We begin with the raw amino-acid sequence, 562 residues long: Septation ring formation regulator EzrA (562 aa).

Topologically, residues 1–2 are extracellular; the sequence is ME. The helical transmembrane segment at 3–21 threads the bilayer; that stretch reads FVIGLLIVLLALFAAGYFF. Residues 22-562 are Cytoplasmic-facing; it reads RKKIYAEIDR…VEKIKADISA (541 aa). Coiled-coil stretches lie at residues 377–425 and 470–497; these read YSLL…LKKT and MEEA…LVEQ.

It belongs to the EzrA family. May be degraded by FtsH protease.

The protein resides in the cell membrane. The protein localises to the membrane raft. Negative regulator of FtsZ ring formation; modulates the frequency and position of FtsZ ring formation. Inhibits FtsZ ring formation at polar sites. Interacts either with FtsZ or with one of its binding partners to promote depolymerization. This is Septation ring formation regulator EzrA from Bacillus subtilis (strain 168).